Here is an 846-residue protein sequence, read N- to C-terminus: uncharacterized protein (846 aa).

WD repeat units follow at residues 88-129 (TKHI…LLYD), 132-172 (EHSR…STIT), 175-215 (GNSE…LPFL), 219-258 (AHNGVVLCVNYSPNGVFLASCGRDKTIRIWDSTSNKKKSL), 262-309 (NNVS…IPYR), and 313-348 (CHDSIVSTMHWASTELLWSCSKDGIFSQTRVENAFN). The tract at residues 541–560 (PREASTPSESSNSSIESEDN) is disordered. Low complexity predominate over residues 544–555 (ASTPSESSNSSI). One copy of the WD 7 repeat lies at 624 to 663 (FHRSSVTSASIKSREAVLSAGNSSRRASIFLDQLSLHGDT).

This is an uncharacterized protein from Schizosaccharomyces pombe (strain 972 / ATCC 24843) (Fission yeast).